The following is a 76-amino-acid chain: Kappa-actitoxin-Avd4e (76 aa).

The N-terminal stretch at 1–19 is a signal peptide; the sequence is MNKALFLCLVVLCAAVVFA. A propeptide spanning residues 20–31 is cleaved from the precursor; that stretch reads AEDLQKAKHAPF. 3 disulfide bridges follow: cysteine 37/cysteine 72, cysteine 39/cysteine 65, and cysteine 55/cysteine 73. The Cell attachment site signature appears at 45-47; that stretch reads RGD.

The protein belongs to the sea anemone type 3 (BDS) potassium channel toxin family. In terms of tissue distribution, moderately expressed in the ectodermal tissue from the distal and proximal tentacles, body wall, and oral disk.

It localises to the secreted. Its subcellular location is the nematocyst. Its function is as follows. Is member of a fraction that shows antiangiogenic activity, since it inhibits human microvascular endothelial cells (HMEC) tubulogenesis. This protein could be a kunitz-type inhibitor with a RGD motif that could block angiogenesis in binding on integrins. Blocks Kv3 voltage-gated potassium channels. Reduces blood pressure. The chain is Kappa-actitoxin-Avd4e from Anemonia viridis (Snakelocks anemone).